A 273-amino-acid chain; its full sequence is Putative pyruvate, phosphate dikinase regulatory protein 2 (273 aa).

151-158 (GISRTSKT) contributes to the ADP binding site.

This sequence belongs to the pyruvate, phosphate/water dikinase regulatory protein family. PDRP subfamily.

The enzyme catalyses N(tele)-phospho-L-histidyl/L-threonyl-[pyruvate, phosphate dikinase] + ADP = N(tele)-phospho-L-histidyl/O-phospho-L-threonyl-[pyruvate, phosphate dikinase] + AMP + H(+). The catalysed reaction is N(tele)-phospho-L-histidyl/O-phospho-L-threonyl-[pyruvate, phosphate dikinase] + phosphate + H(+) = N(tele)-phospho-L-histidyl/L-threonyl-[pyruvate, phosphate dikinase] + diphosphate. In terms of biological role, bifunctional serine/threonine kinase and phosphorylase involved in the regulation of the pyruvate, phosphate dikinase (PPDK) by catalyzing its phosphorylation/dephosphorylation. The polypeptide is Putative pyruvate, phosphate dikinase regulatory protein 2 (Staphylococcus saprophyticus subsp. saprophyticus (strain ATCC 15305 / DSM 20229 / NCIMB 8711 / NCTC 7292 / S-41)).